Here is a 348-residue protein sequence, read N- to C-terminus: Probable dual-specificity RNA methyltransferase RlmN (348 aa).

The active-site Proton acceptor is the Glu93. Positions 99–333 (TEKRLTACLS…VSLRKSRGSD (235 aa)) constitute a Radical SAM core domain. A disulfide bridge links Cys106 with Cys338. Residues Cys113, Cys117, and Cys120 each coordinate [4Fe-4S] cluster. S-adenosyl-L-methionine contacts are provided by residues 160–161 (GE), Ser190, 219–221 (SLH), and Asn295. Cys338 (S-methylcysteine intermediate) is an active-site residue.

It belongs to the radical SAM superfamily. RlmN family. Requires [4Fe-4S] cluster as cofactor.

It localises to the cytoplasm. It catalyses the reaction adenosine(2503) in 23S rRNA + 2 reduced [2Fe-2S]-[ferredoxin] + 2 S-adenosyl-L-methionine = 2-methyladenosine(2503) in 23S rRNA + 5'-deoxyadenosine + L-methionine + 2 oxidized [2Fe-2S]-[ferredoxin] + S-adenosyl-L-homocysteine. It carries out the reaction adenosine(37) in tRNA + 2 reduced [2Fe-2S]-[ferredoxin] + 2 S-adenosyl-L-methionine = 2-methyladenosine(37) in tRNA + 5'-deoxyadenosine + L-methionine + 2 oxidized [2Fe-2S]-[ferredoxin] + S-adenosyl-L-homocysteine. Specifically methylates position 2 of adenine 2503 in 23S rRNA and position 2 of adenine 37 in tRNAs. This chain is Probable dual-specificity RNA methyltransferase RlmN, found in Prochlorococcus marinus (strain MIT 9515).